The sequence spans 158 residues: MFDILMYLFENYVHSEVELLVDEDELTKELTRAGFHQSEILKALTWLERLAELQEGDKPYLCNHDQHSFRIYTKEEMEKLDVECRGFLLFLEQVKVLNVETREMVIDRVMELDEPALILEDLKWVILMVLFNAPGHESAYEQMEDLIFEQPEEGRLHS.

The protein belongs to the Smg family.

The sequence is that of Protein Smg homolog from Shewanella sp. (strain MR-4).